Reading from the N-terminus, the 82-residue chain is Beta-defensin 113 (82 aa).

The first 16 residues, 1 to 16 (MKILCIFLTFFFTVSC), serve as a signal peptide directing secretion. Disulfide bonds link cysteine 35–cysteine 61, cysteine 42–cysteine 56, and cysteine 46–cysteine 62.

It belongs to the beta-defensin family.

It localises to the secreted. In terms of biological role, has antibacterial activity. The protein is Beta-defensin 113 (DEFB113) of Pan troglodytes (Chimpanzee).